Reading from the N-terminus, the 86-residue chain is Gas vesicle protein A1 (86 aa).

The protein belongs to the gas vesicle GvpA family. The gas vesicle shell is 2 nm thick and consists of a single layer of this protein. It forms helical ribs nearly perpendicular to the long axis of the vesicle.

Its subcellular location is the gas vesicle shell. Its function is as follows. Gas vesicles are hollow, gas filled proteinaceous nanostructures found in some microorganisms. During planktonic growth they allow positioning of the organism at a favorable depth for light or nutrient acquisition. GvpA forms the protein shell. In terms of biological role, it is not clear if the 2 type A proteins in this organism are functionally redundant. Functionally, when the full gvp locus (gvpA1-gvpP-gvpQ-gvpA2-gvpR-gvpN-gvpF-gvpG-gvpL-gvpS-gvpK-gvpJ-gvpT-gvpU, called pNL26) is expressed in E.coli gas vesicles are made. The protein is Gas vesicle protein A1 of Priestia megaterium (Bacillus megaterium).